The sequence spans 311 residues: MQENQQITKKEQYNLNKLQKRLRRNVGEAIADFNMIEEGDRIMVCLSGGKDSYTMLEILRNLQQSAPINFSLVAVNLDQKQPGFPEHVLPEYLETLGVEYKIVEENTYGIVKEKIPEGKTTCSLCSRLRRGILYRTATELGATKIALGHHRDDILQTLFLNMFYGGKMKGMPPKLMSDDGKHIVIRPLAYCREKDIQRFADAKAFPIIPCNLCGSQPNLQRQVIADMLRDWDKRYPGRIETMFSAMQNVVPSHLCDTNLFDFKGITHGSEVVNGGDLAFDREEIPLQPAGWQPEEDENQLDELRLNVVEVK.

A PP-loop motif motif is present at residues 47–52 (SGGKDS). Residues Cys-122, Cys-125, and Cys-213 each contribute to the [4Fe-4S] cluster site.

The protein belongs to the TtcA family. Homodimer. Mg(2+) serves as cofactor. Requires [4Fe-4S] cluster as cofactor.

It is found in the cytoplasm. The catalysed reaction is cytidine(32) in tRNA + S-sulfanyl-L-cysteinyl-[cysteine desulfurase] + AH2 + ATP = 2-thiocytidine(32) in tRNA + L-cysteinyl-[cysteine desulfurase] + A + AMP + diphosphate + H(+). Its pathway is tRNA modification. In terms of biological role, catalyzes the ATP-dependent 2-thiolation of cytidine in position 32 of tRNA, to form 2-thiocytidine (s(2)C32). The sulfur atoms are provided by the cysteine/cysteine desulfurase (IscS) system. The sequence is that of tRNA-cytidine(32) 2-sulfurtransferase from Escherichia coli O81 (strain ED1a).